The primary structure comprises 580 residues: D-erythrulose kinase (580 aa).

The region spanning 7-327 (DPARFTEDML…WAAPADTPAY (321 aa)) is the DhaK domain. The active-site Tele-hemiaminal-histidine intermediate is the His217. Positions 329–360 (KGAAQQHVSGERRSEATARSASSGPKLAELSD) are disordered. The region spanning 368-570 (RLVARAFDAM…LALCARTVAD (203 aa)) is the DhaL domain. Residues 397 to 403 (DGDHGRG), 443 to 444 (TS), Gly485, Arg542, and 555 to 557 (DAG) contribute to the ATP site.

It catalyses the reaction D-erythrulose + ATP = D-erythrulose 4-phosphate + ADP + H(+). It participates in carbohydrate metabolism; erythritol degradation. Its pathway is carbohydrate metabolism; D-threitol degradation. Functionally, catalyzes the phosphorylation of D-erythrulose to D-erythrulose-4P. Involved in the degradation pathways of erythritol and D-threitol, that allow M.smegmatis to grow on these compounds as the sole carbon source. In Mycolicibacterium smegmatis (strain ATCC 700084 / mc(2)155) (Mycobacterium smegmatis), this protein is D-erythrulose kinase.